We begin with the raw amino-acid sequence, 169 residues long: Ribosome maturation factor RimM (169 aa).

A PRC barrel domain is found at 92 to 167 (PKDTYFICDI…YMKIKVVEGL (76 aa)).

This sequence belongs to the RimM family. In terms of assembly, binds ribosomal protein uS19.

Its subcellular location is the cytoplasm. In terms of biological role, an accessory protein needed during the final step in the assembly of 30S ribosomal subunit, possibly for assembly of the head region. Essential for efficient processing of 16S rRNA. May be needed both before and after RbfA during the maturation of 16S rRNA. It has affinity for free ribosomal 30S subunits but not for 70S ribosomes. This is Ribosome maturation factor RimM from Caldicellulosiruptor bescii (strain ATCC BAA-1888 / DSM 6725 / KCTC 15123 / Z-1320) (Anaerocellum thermophilum).